Consider the following 313-residue polypeptide: 2-phosphoglycerate kinase (313 aa).

Residues 8-95 (SRILVKDKEY…LWRRVLKKHS (88 aa)) form the ATP-cone domain.

The protein belongs to the 2-phosphoglycerate kinase family. Requires a divalent metal cation as cofactor.

It catalyses the reaction (2R)-2-phosphoglycerate + ATP = (2R)-2,3-bisphosphoglycerate + ADP + H(+). It participates in thermoadapter biosynthesis; cyclic 2,3-diphosphoglycerate biosynthesis; cyclic 2,3-diphosphoglycerate from 2-phospho-D-glycerate: step 1/2. Catalyzes the phosphorylation of 2-phosphoglycerate to 2,3-diphosphoglycerate. Involved in the biosynthesis of cyclic 2,3-bisphosphoglycerate, a thermoprotectant. The polypeptide is 2-phosphoglycerate kinase (Methanococcus maripaludis (strain C5 / ATCC BAA-1333)).